The primary structure comprises 140 residues: Nucleoside diphosphate kinase (140 aa).

6 residues coordinate ATP: Lys-11, Phe-59, Arg-87, Thr-93, Arg-104, and Asn-114. The active-site Pros-phosphohistidine intermediate is the His-117.

It belongs to the NDK family. In terms of assembly, homotetramer. Mg(2+) serves as cofactor.

The protein resides in the cytoplasm. It catalyses the reaction a 2'-deoxyribonucleoside 5'-diphosphate + ATP = a 2'-deoxyribonucleoside 5'-triphosphate + ADP. It carries out the reaction a ribonucleoside 5'-diphosphate + ATP = a ribonucleoside 5'-triphosphate + ADP. Its function is as follows. Major role in the synthesis of nucleoside triphosphates other than ATP. The ATP gamma phosphate is transferred to the NDP beta phosphate via a ping-pong mechanism, using a phosphorylated active-site intermediate. The polypeptide is Nucleoside diphosphate kinase (Sinorhizobium fredii (strain NBRC 101917 / NGR234)).